Consider the following 1819-residue polypeptide: U3 small nucleolar RNA-associated protein 10 (1819 aa).

The HEAT 1 repeat unit spans residues 583-620 (LDFQAILPFLLVALADPSERIRREAAAALAAIGGIYKK). The next 2 membrane-spanning stretches (helical) occupy residues 945–965 (IQSG…AIVN) and 1001–1021 (ALLL…HSVM). HEAT repeat units lie at residues 1045 to 1082 (QTID…AFEH), 1269 to 1306 (LTLV…QNPE), 1313 to 1351 (IRVL…KYGK), and 1775 to 1812 (ALLP…VLGE).

Belongs to the HEATR1/UTP10 family. Component of the ribosomal small subunit (SSU) processome.

The protein localises to the nucleus. It is found in the nucleolus. Its subcellular location is the membrane. In terms of biological role, involved in nucleolar processing of pre-18S ribosomal RNA. Involved in ribosome biosynthesis. The protein is U3 small nucleolar RNA-associated protein 10 of Aspergillus clavatus (strain ATCC 1007 / CBS 513.65 / DSM 816 / NCTC 3887 / NRRL 1 / QM 1276 / 107).